The following is a 341-amino-acid chain: Mitochondrial dimethyladenosine transferase 1 (341 aa).

A mitochondrion-targeting transit peptide spans 1 to 27 (MASSRTLGTFRLPPLPTIREIIKLFRL). Residues L38, G63, E85, K86, D111, V112, and N141 each contribute to the S-adenosyl-L-methionine site.

Belongs to the class I-like SAM-binding methyltransferase superfamily. rRNA adenine N(6)-methyltransferase family. KsgA subfamily. Interacts with mitochondrial RNA polymerase POLRMT. Interacts with TFAM. Bound to the maturing mtSSU until the late stages of assembly.

The protein resides in the mitochondrion. It carries out the reaction adenosine(N)/adenosine(N+1) in rRNA + 4 S-adenosyl-L-methionine = N(6)-dimethyladenosine(N)/N(6)-dimethyladenosine(N+1) in rRNA + 4 S-adenosyl-L-homocysteine + 4 H(+). Functionally, mitochondrial methyltransferase which uses S-adenosyl methionine to dimethylate two highly conserved adjacent adenosine residues (A1583 and A1584) within the loop of helix 45 at the 3-prime end of 12S rRNA, thereby regulating the assembly or stability of the small subunit of the mitochondrial ribosome. Also required for basal transcription of mitochondrial DNA, probably via its interaction with POLRMT and TFAM. Stimulates transcription independently of the methyltransferase activity. This chain is Mitochondrial dimethyladenosine transferase 1 (TFB1M), found in Bos taurus (Bovine).